We begin with the raw amino-acid sequence, 60 residues long: Cytotoxin 5 (60 aa).

4 disulfides stabilise this stretch: C3–C21, C14–C38, C42–C53, and C54–C59.

The protein belongs to the three-finger toxin family. Short-chain subfamily. Type IA cytotoxin sub-subfamily. In terms of assembly, monomer in solution; Homodimer and oligomer in the presence of negatively charged lipids forming a pore with a size ranging between 20 and 30 Angstroms. In terms of tissue distribution, expressed by the venom gland.

It is found in the secreted. It localises to the target cell membrane. Shows cytolytic activity on many different cells by forming pore in lipid membranes. In vivo, increases heart rate or kills the animal by cardiac arrest. In addition, it binds to heparin with high affinity, interacts with Kv channel-interacting protein 1 (KCNIP1) in a calcium-independent manner, and binds to integrin alpha-V/beta-3 (ITGAV/ITGB3) with moderate affinity. The polypeptide is Cytotoxin 5 (Naja annulifera (Banded Egyptian cobra)).